A 374-amino-acid chain; its full sequence is Biotin synthase (374 aa).

One can recognise a Radical SAM core domain in the interval Asn-51–Arg-278. Residues Cys-66, Cys-70, and Cys-73 each contribute to the [4Fe-4S] cluster site. 4 residues coordinate [2Fe-2S] cluster: Cys-110, Cys-143, Cys-203, and Arg-273. Residues Ile-346 to Ala-374 are disordered.

Belongs to the radical SAM superfamily. Biotin synthase family. As to quaternary structure, homodimer. [4Fe-4S] cluster is required as a cofactor. Requires [2Fe-2S] cluster as cofactor.

The enzyme catalyses (4R,5S)-dethiobiotin + (sulfur carrier)-SH + 2 reduced [2Fe-2S]-[ferredoxin] + 2 S-adenosyl-L-methionine = (sulfur carrier)-H + biotin + 2 5'-deoxyadenosine + 2 L-methionine + 2 oxidized [2Fe-2S]-[ferredoxin]. It functions in the pathway cofactor biosynthesis; biotin biosynthesis; biotin from 7,8-diaminononanoate: step 2/2. Functionally, catalyzes the conversion of dethiobiotin (DTB) to biotin by the insertion of a sulfur atom into dethiobiotin via a radical-based mechanism. This is Biotin synthase from Nocardioides sp. (strain ATCC BAA-499 / JS614).